Consider the following 106-residue polypeptide: PTS system fructose-like EIIB component 2 (106 aa).

One can recognise a PTS EIIB type-2 domain in the interval 1-103 (MTKIIAVTAC…IMSKIEAHLA (103 aa)). The active-site Phosphocysteine intermediate is the Cys10. Cys10 is modified (phosphocysteine; by EIIA).

The protein localises to the cytoplasm. The enzyme catalyses D-fructose(out) + N(pros)-phospho-L-histidyl-[protein] = D-fructose 1-phosphate(in) + L-histidyl-[protein]. Functionally, the phosphoenolpyruvate-dependent sugar phosphotransferase system (sugar PTS), a major carbohydrate active transport system, catalyzes the phosphorylation of incoming sugar substrates concomitantly with their translocation across the cell membrane. The enzyme II FrwABC PTS system is involved in fructose transport. The sequence is that of PTS system fructose-like EIIB component 2 (frwB) from Escherichia coli O157:H7.